The primary structure comprises 106 residues: Gibberellin-regulated protein 4 (106 aa).

Residues 1–25 (MAKSYGAIFLLTLIVLFMLQTMVMA) form the signal peptide.

Belongs to the GASA family. Six disulfide bonds may be present. In terms of tissue distribution, expressed in flower buds, style, stamen filaments, vasculature of petals, root phloem, vasculature of cotyledons and rosette leaves and developing embryo.

The protein localises to the secreted. Its function is as follows. Gibberellin-regulated protein involved in the regulation of floral meristem and floral organ identity, and promotion of seed size and weight. May play a role in the promotion of gibberellin responses such as regulation of flowering under short-day conditions, seed germination and inhibition of gibberellin oxidase. Possesses redox activity in E.coli and may function in redox regulation in planta. In Arabidopsis thaliana (Mouse-ear cress), this protein is Gibberellin-regulated protein 4 (GASA4).